A 329-amino-acid polypeptide reads, in one-letter code: Glutamine synthetase (329 aa).

One can recognise a GS beta-grasp domain in the interval tyrosine 4–alanine 86. Residues proline 89–serine 329 form the GS catalytic domain. Residues glutamate 109 and glutamate 111 each contribute to the Mg(2+) site. Glutamate 167 serves as a coordination point for ATP. Mg(2+) contacts are provided by glutamate 172 and glutamate 179. Residue glutamate 278 coordinates L-glutamate.

The protein belongs to the glutamine synthetase family. Homooctamer and homotetramer. Mg(2+) serves as cofactor.

The protein localises to the cytoplasm. The catalysed reaction is L-glutamate + NH4(+) + ATP = L-glutamine + ADP + phosphate + H(+). Its function is as follows. Catalyzes the ATP-dependent biosynthesis of glutamine from glutamate and ammonia. In Rhizobium meliloti (Ensifer meliloti), this protein is Glutamine synthetase.